The primary structure comprises 420 residues: MDRIVVKGSGPLSGQIPIAGAKNTCLKLMCAALLSDEPLTLTNVPRLSDVATLSELLESLGVQIGRLDDGQTLAFSANTLTSQLAHYDIVRKLRASFNVLGPLLGRTGQAVVSLPGGCAIGARAVDFHITGLEAMGAKIELKDGYVHAAGDLKGAEIEFPFPSVGATENVMCAAVRAKGTTVIKNAAREPDTKALADCLIAMGADIEGAGTETMIVRGVDRLHGATHRVIADRIEMGTYMCAPGIAGGEVECLGGTRALVASLCDKMEAAGLEITETDAGLKVRHPGGRLKAVDVATAPFPGFPTDLQAQFMAMMCFADGTSVLEETIFENRFMHAPELIRMGASIDVQGNTARVTGVDRLRGAPVMATDLRASVSLILAGLAADGETTVNRVYHLDRGYEHLVRKLRGVGANVERLSDG.

22–23 (KN) is a phosphoenolpyruvate binding site. Residue Arg94 coordinates UDP-N-acetyl-alpha-D-glucosamine. Cys118 (proton donor) is an active-site residue. 2-(S-cysteinyl)pyruvic acid O-phosphothioketal is present on Cys118. UDP-N-acetyl-alpha-D-glucosamine is bound by residues Asp306 and Ile328.

This sequence belongs to the EPSP synthase family. MurA subfamily.

The protein localises to the cytoplasm. The catalysed reaction is phosphoenolpyruvate + UDP-N-acetyl-alpha-D-glucosamine = UDP-N-acetyl-3-O-(1-carboxyvinyl)-alpha-D-glucosamine + phosphate. It participates in cell wall biogenesis; peptidoglycan biosynthesis. In terms of biological role, cell wall formation. Adds enolpyruvyl to UDP-N-acetylglucosamine. This Jannaschia sp. (strain CCS1) protein is UDP-N-acetylglucosamine 1-carboxyvinyltransferase.